The following is a 90-amino-acid chain: RNA-binding protein Hfq (90 aa).

Positions 9 to 69 (DRFLNHLRVN…ISTIIPSSYV (61 aa)) constitute a Sm domain.

This sequence belongs to the Hfq family. Homohexamer.

In terms of biological role, RNA chaperone that binds small regulatory RNA (sRNAs) and mRNAs to facilitate mRNA translational regulation in response to envelope stress, environmental stress and changes in metabolite concentrations. Also binds with high specificity to tRNAs. The polypeptide is RNA-binding protein Hfq (Thermotoga sp. (strain RQ2)).